The sequence spans 365 residues: Protein RecA (365 aa).

73-80 (GPESSGKT) lines the ATP pocket.

The protein belongs to the RecA family.

The protein localises to the cytoplasm. In terms of biological role, can catalyze the hydrolysis of ATP in the presence of single-stranded DNA, the ATP-dependent uptake of single-stranded DNA by duplex DNA, and the ATP-dependent hybridization of homologous single-stranded DNAs. It interacts with LexA causing its activation and leading to its autocatalytic cleavage. This is Protein RecA from Prochlorococcus marinus (strain MIT 9301).